Reading from the N-terminus, the 164-residue chain is UPF0262 protein Saro_0143 (164 aa).

Belongs to the UPF0262 family.

This Novosphingobium aromaticivorans (strain ATCC 700278 / DSM 12444 / CCUG 56034 / CIP 105152 / NBRC 16084 / F199) protein is UPF0262 protein Saro_0143.